Consider the following 162-residue polypeptide: NADH-quinone oxidoreductase subunit I (162 aa).

2 consecutive 4Fe-4S ferredoxin-type domains span residues 54-83 (RRYENGEERCIACKLCEAVCPALAITIESE) and 93-122 (TRYDIDLTKCIFCGFCEESCPVDSIVETHI). 8 residues coordinate [4Fe-4S] cluster: cysteine 63, cysteine 66, cysteine 69, cysteine 73, cysteine 102, cysteine 105, cysteine 108, and cysteine 112.

Belongs to the complex I 23 kDa subunit family. As to quaternary structure, NDH-1 is composed of 14 different subunits. Subunits NuoA, H, J, K, L, M, N constitute the membrane sector of the complex. [4Fe-4S] cluster serves as cofactor.

The protein localises to the cell inner membrane. It catalyses the reaction a quinone + NADH + 5 H(+)(in) = a quinol + NAD(+) + 4 H(+)(out). Its function is as follows. NDH-1 shuttles electrons from NADH, via FMN and iron-sulfur (Fe-S) centers, to quinones in the respiratory chain. The immediate electron acceptor for the enzyme in this species is believed to be ubiquinone. Couples the redox reaction to proton translocation (for every two electrons transferred, four hydrogen ions are translocated across the cytoplasmic membrane), and thus conserves the redox energy in a proton gradient. The sequence is that of NADH-quinone oxidoreductase subunit I from Paraburkholderia xenovorans (strain LB400).